The chain runs to 406 residues: Putative colanic acid biosynthesis glycosyltransferase WcaL (406 aa).

Belongs to the glycosyltransferase group 1 family. Glycosyltransferase 4 subfamily.

The protein operates within slime biogenesis; slime polysaccharide biosynthesis. The protein is Putative colanic acid biosynthesis glycosyltransferase WcaL (wcaL) of Escherichia coli (strain K12).